The following is a 261-amino-acid chain: uncharacterized protein (261 aa).

Residues 1–12 are compositionally biased toward polar residues; the sequence is MSRTSSQNQEII. The interval 1–139 is disordered; that stretch reads MSRTSSQNQE…KELDTINKKT (139 aa). The segment covering 23-55 has biased composition (low complexity); that stretch reads SSKPSKSSKPSKSSKPSKSSKTSKSSRSSGSKS. Residues 65-74 are compositionally biased toward basic and acidic residues; that stretch reads SRKDKYKEEY. Residues 79-108 show a composition bias toward acidic residues; sequence YPDEQEYEQEYEQEYEQEYQDNGEQTEEFV. A compositionally biased stretch (basic and acidic residues) spans 122 to 139; the sequence is DERQTQSNKELDTINKKT. Coiled coils occupy residues 151 to 181 and 218 to 243; these read MDHD…IIKL and EDII…KKIE.

This is an uncharacterized protein from Acanthamoeba polyphaga (Amoeba).